The primary structure comprises 60 residues: Light-harvesting protein B-800/850 alpha chain (60 aa).

The Cytoplasmic segment spans residues 1-14 (MNNAKIWTVVKPST). Residues 15 to 35 (GIPLILGAVAVAALIVHAGLL) form a helical membrane-spanning segment. Residue H31 participates in a bacteriochlorophyll binding. Residues 36–60 (TNTTWFANYWNGNPMATVVAVAPAQ) are Periplasmic-facing.

It belongs to the antenna complex alpha subunit family. The core complex is formed by different alpha and beta chains, binding bacteriochlorophyll molecules, and arranged most probably in tetrameric structures disposed around the reaction center. The non-pigmented gamma chains may constitute additional components.

Its subcellular location is the cell inner membrane. Functionally, antenna complexes are light-harvesting systems, which transfer the excitation energy to the reaction centers. The chain is Light-harvesting protein B-800/850 alpha chain (pucA) from Rhodobacter capsulatus (Rhodopseudomonas capsulata).